A 194-amino-acid chain; its full sequence is Dof zinc finger protein DOF1.7 (194 aa).

The Dof-type zinc-finger motif lies at 33–87 (LKCPRCDSPNTKFCYYNNYNLSQPRHFCKNCRRYWTKGGALRNIPVGGGTRKSNK). Zn(2+)-binding residues include Cys35, Cys38, Cys60, and Cys63. Positions 74–125 (RNIPVGGGTRKSNKRSGSSPSSNLKNQTVAEKPDHHGSGSEEKEERVSGQEM) are disordered. Low complexity predominate over residues 88-99 (RSGSSPSSNLKN). Residues 104 to 121 (EKPDHHGSGSEEKEERVS) show a composition bias toward basic and acidic residues.

It localises to the nucleus. Transcription factor that binds specifically to a 5'-AA[AG]G-3' consensus core sequence. This is Dof zinc finger protein DOF1.7 (DOF1.7) from Arabidopsis thaliana (Mouse-ear cress).